A 110-amino-acid polypeptide reads, in one-letter code: MLLEHLLIILWMQLTWVSGQQLNQSPQSMFIQEGEDVSMNCTSSSIFNTWLWYKQEPGEGPVLLIALYKAGELTSNGRLTAQFGITRKDSFLNISASIPSDVGIYFCAGQ.

An N-terminal signal peptide occupies residues 1 to 19 (MLLEHLLIILWMQLTWVSG). An Ig-like domain is found at 20-110 (QQLNQSPQSM…DVGIYFCAGQ (91 aa)). Residues asparagine 40 and asparagine 93 are each glycosylated (N-linked (GlcNAc...) asparagine). Cysteine 41 and cysteine 107 are joined by a disulfide.

Alpha-beta TR is a heterodimer composed of an alpha and beta chain; disulfide-linked. The alpha-beta TR is associated with the transmembrane signaling CD3 coreceptor proteins to form the TR-CD3 (TcR or TCR). The assembly of alpha-beta TR heterodimers with CD3 occurs in the endoplasmic reticulum where a single alpha-beta TR heterodimer associates with one CD3D-CD3E heterodimer, one CD3G-CD3E heterodimer and one CD247 homodimer forming a stable octameric structure. CD3D-CD3E and CD3G-CD3E heterodimers preferentially associate with TR alpha and TR beta chains, respectively. The association of the CD247 homodimer is the last step of TcR assembly in the endoplasmic reticulum and is required for transport to the cell surface.

It localises to the cell membrane. Functionally, v region of the variable domain of T cell receptor (TR) alpha chain that participates in the antigen recognition. Alpha-beta T cell receptors are antigen specific receptors which are essential to the immune response and are present on the cell surface of T lymphocytes. Recognize peptide-major histocompatibility (MH) (pMH) complexes that are displayed by antigen presenting cells (APC), a prerequisite for efficient T cell adaptive immunity against pathogens. Binding of alpha-beta TR to pMH complex initiates TR-CD3 clustering on the cell surface and intracellular activation of LCK that phosphorylates the ITAM motifs of CD3G, CD3D, CD3E and CD247 enabling the recruitment of ZAP70. In turn ZAP70 phosphorylates LAT, which recruits numerous signaling molecules to form the LAT signalosome. The LAT signalosome propagates signal branching to three major signaling pathways, the calcium, the mitogen-activated protein kinase (MAPK) kinase and the nuclear factor NF-kappa-B (NF-kB) pathways, leading to the mobilization of transcription factors that are critical for gene expression and essential for T cell growth and differentiation. The T cell repertoire is generated in the thymus, by V-(D)-J rearrangement. This repertoire is then shaped by intrathymic selection events to generate a peripheral T cell pool of self-MH restricted, non-autoaggressive T cells. Post-thymic interaction of alpha-beta TR with the pMH complexes shapes TR structural and functional avidity. In Homo sapiens (Human), this protein is T cell receptor alpha variable 35.